The chain runs to 1101 residues: Serine/threonine-protein kinase PSK2 (1101 aa).

Threonine 118 is subject to Phosphothreonine. The 259-residue stretch at 841 to 1099 (FTILQVMGEG…IDEIYEDKWL (259 aa)) folds into the Protein kinase domain. ATP is bound by residues 847-855 (MGEGAYGKV) and lysine 870. Aspartate 975 (proton acceptor) is an active-site residue.

This sequence belongs to the protein kinase superfamily. Ser/Thr protein kinase family.

Its subcellular location is the cytoplasm. The catalysed reaction is L-seryl-[protein] + ATP = O-phospho-L-seryl-[protein] + ADP + H(+). It catalyses the reaction L-threonyl-[protein] + ATP = O-phospho-L-threonyl-[protein] + ADP + H(+). Functionally, serine/threonine-protein kinase involved in the control of sugar metabolism and translation. Phosphorylates UGP1, which is required for normal glycogen and beta-(1,6)-glucan synthesis. This phosphorylation shifts glucose partitioning toward cell wall glucan synthesis at the expense of glycogen synthesis. Also phosphorylates the glycogen synthase GSY2 and the translation factors CAF20, TIF11 and SRO9. The sequence is that of Serine/threonine-protein kinase PSK2 (PSK2) from Saccharomyces cerevisiae (strain ATCC 204508 / S288c) (Baker's yeast).